Consider the following 343-residue polypeptide: Dihydroorotase (343 aa).

His13 and His15 together coordinate Zn(2+). Substrate-binding positions include 15–17 and Asn41; that span reads HLR. 3 residues coordinate Zn(2+): Lys99, His136, and His174. At Lys99 the chain carries N6-carboxylysine. Residue His136 coordinates substrate. Leu219 contacts substrate. Asp247 contributes to the Zn(2+) binding site. Asp247 is a catalytic residue. Residues His251 and Ala263 each coordinate substrate.

It belongs to the metallo-dependent hydrolases superfamily. DHOase family. Class II DHOase subfamily. In terms of assembly, homodimer. Zn(2+) serves as cofactor.

It carries out the reaction (S)-dihydroorotate + H2O = N-carbamoyl-L-aspartate + H(+). It functions in the pathway pyrimidine metabolism; UMP biosynthesis via de novo pathway; (S)-dihydroorotate from bicarbonate: step 3/3. Its function is as follows. Catalyzes the reversible cyclization of carbamoyl aspartate to dihydroorotate. This is Dihydroorotase from Shewanella sp. (strain ANA-3).